A 252-amino-acid chain; its full sequence is Hydroxyacylglutathione hydrolase (252 aa).

Zn(2+) contacts are provided by histidine 54, histidine 56, aspartate 58, histidine 59, histidine 111, aspartate 128, and histidine 166.

It belongs to the metallo-beta-lactamase superfamily. Glyoxalase II family. As to quaternary structure, monomer. It depends on Zn(2+) as a cofactor.

It catalyses the reaction an S-(2-hydroxyacyl)glutathione + H2O = a 2-hydroxy carboxylate + glutathione + H(+). It functions in the pathway secondary metabolite metabolism; methylglyoxal degradation; (R)-lactate from methylglyoxal: step 2/2. Functionally, thiolesterase that catalyzes the hydrolysis of S-D-lactoyl-glutathione to form glutathione and D-lactic acid. This Photobacterium profundum (strain SS9) protein is Hydroxyacylglutathione hydrolase.